A 321-amino-acid chain; its full sequence is Ferredoxin--NADP reductase (321 aa).

Residues E33, Q41, Y46, V86, L119, D277, and S318 each contribute to the FAD site.

It belongs to the ferredoxin--NADP reductase type 2 family. In terms of assembly, homodimer. Requires FAD as cofactor.

The enzyme catalyses 2 reduced [2Fe-2S]-[ferredoxin] + NADP(+) + H(+) = 2 oxidized [2Fe-2S]-[ferredoxin] + NADPH. This Lactococcus lactis subsp. cremoris (strain MG1363) protein is Ferredoxin--NADP reductase.